We begin with the raw amino-acid sequence, 171 residues long: MVLVKMALGFLILLSPLCAMELDISQTDIIERSLNFLLFVGILWYFLAKKLRSFLHAKSLEISKHLDEIQAQLKASKENKKKLLKELEQAKEKAELIVSDANKEAYTITQKYELQTKIDVENLIKNSKALMDLEVKKIKRELVESVFKDLRESKKVSFSTQDCVNILKQRL.

Residues 2–22 (VLVKMALGFLILLSPLCAMEL) traverse the membrane as a helical segment.

It belongs to the ATPase B chain family. In terms of assembly, F-type ATPases have 2 components, F(1) - the catalytic core - and F(0) - the membrane proton channel. F(1) has five subunits: alpha(3), beta(3), gamma(1), delta(1), epsilon(1). F(0) has three main subunits: a(1), b(2) and c(10-14). The alpha and beta chains form an alternating ring which encloses part of the gamma chain. F(1) is attached to F(0) by a central stalk formed by the gamma and epsilon chains, while a peripheral stalk is formed by the delta and b chains.

It localises to the cell inner membrane. In terms of biological role, f(1)F(0) ATP synthase produces ATP from ADP in the presence of a proton or sodium gradient. F-type ATPases consist of two structural domains, F(1) containing the extramembraneous catalytic core and F(0) containing the membrane proton channel, linked together by a central stalk and a peripheral stalk. During catalysis, ATP synthesis in the catalytic domain of F(1) is coupled via a rotary mechanism of the central stalk subunits to proton translocation. Component of the F(0) channel, it forms part of the peripheral stalk, linking F(1) to F(0). The protein is ATP synthase subunit b of Helicobacter acinonychis (strain Sheeba).